Consider the following 399-residue polypeptide: Secreted RxLR effector protein 36 (399 aa).

An N-terminal signal peptide occupies residues 1-21 (MRGTIYVAIAILVAASSRSSA). The RxLR-dEER signature appears at 50–71 (RILRESRGSNDKLAVGAGDEER). A glycan (N-linked (GlcNAc...) asparagine) is linked at N75. The tract at residues 126-145 (IDPTPSNLGGQALHAPPNPD) is disordered.

Belongs to the RxLR effector family.

The protein localises to the secreted. The protein resides in the host nucleus. Functionally, secreted effector that completely suppresses the host cell death induced by cell death-inducing proteins. This Plasmopara viticola (Downy mildew of grapevine) protein is Secreted RxLR effector protein 36.